Consider the following 296-residue polypeptide: Protoheme IX farnesyltransferase 1 (296 aa).

8 helical membrane passes run 14–34 (IVLL…ALSA), 41–61 (LWDY…SSAL), 86–106 (IGEN…VVYA), 108–128 (FLLN…YVII), 141–161 (IVIG…AATG), 165–185 (LLGF…FWCL), 230–250 (AFGM…LMLV), and 274–294 (YLTI…PFPF).

This sequence belongs to the UbiA prenyltransferase family. Protoheme IX farnesyltransferase subfamily.

It localises to the cell membrane. The catalysed reaction is heme b + (2E,6E)-farnesyl diphosphate + H2O = Fe(II)-heme o + diphosphate. Its pathway is porphyrin-containing compound metabolism; heme O biosynthesis; heme O from protoheme: step 1/1. Functionally, converts heme B (protoheme IX) to heme O by substitution of the vinyl group on carbon 2 of heme B porphyrin ring with a hydroxyethyl farnesyl side group. The protein is Protoheme IX farnesyltransferase 1 of Cenarchaeum symbiosum (strain A).